The primary structure comprises 124 residues: Small ribosomal subunit protein eS6 (124 aa).

Belongs to the eukaryotic ribosomal protein eS6 family.

In Methanococcus maripaludis (strain C7 / ATCC BAA-1331), this protein is Small ribosomal subunit protein eS6.